Reading from the N-terminus, the 104-residue chain is uncharacterized protein (104 aa).

This is an uncharacterized protein from Mycoplasma pneumoniae (strain ATCC 29342 / M129 / Subtype 1) (Mycoplasmoides pneumoniae).